Reading from the N-terminus, the 366-residue chain is Protein FAM110B (366 aa).

Disordered stretches follow at residues 127–152 (SSEGSSSGSGHKHSSRNWPPHRDTTD), 163–182 (KVYPTPGHGSPQESSSHVSR), and 216–252 (CSSSAPPLPPKPKVAAMKSPEADQVEPACGVSRRPSL). S234 and S297 each carry phosphoserine. A disordered region spans residues 313-333 (DCEQSQDSNSDLRNDDSANDR). Basic and acidic residues predominate over residues 322-331 (SDLRNDDSAN).

Belongs to the FAM110 family.

The protein resides in the cytoplasm. The protein localises to the cytoskeleton. It is found in the microtubule organizing center. Its subcellular location is the centrosome. The protein is Protein FAM110B (Fam110b) of Mus musculus (Mouse).